Here is a 347-residue protein sequence, read N- to C-terminus: NADH-ubiquinone oxidoreductase chain 2 (347 aa).

Transmembrane regions (helical) follow at residues 3 to 23 (PPIL…VLMS), 25 to 45 (HWLM…PILM), 67 to 87 (SMLL…WAVL), 150 to 170 (NPHL…WGGL), 178 to 198 (ILAY…TYSP), 201 to 221 (MLLN…LFMF), 237 to 257 (LPLI…LPPL), 274 to 294 (NMII…YFYM), and 323 to 343 (MTML…TPMM).

This sequence belongs to the complex I subunit 2 family. Core subunit of respiratory chain NADH dehydrogenase (Complex I) which is composed of 45 different subunits. Interacts with TMEM242.

It is found in the mitochondrion inner membrane. It carries out the reaction a ubiquinone + NADH + 5 H(+)(in) = a ubiquinol + NAD(+) + 4 H(+)(out). Its function is as follows. Core subunit of the mitochondrial membrane respiratory chain NADH dehydrogenase (Complex I) which catalyzes electron transfer from NADH through the respiratory chain, using ubiquinone as an electron acceptor. Essential for the catalytic activity and assembly of complex I. The chain is NADH-ubiquinone oxidoreductase chain 2 from Mustela kathiah (Yellow-bellied weasel).